We begin with the raw amino-acid sequence, 163 residues long: Endoribonuclease YbeY (163 aa).

Zn(2+)-binding residues include H126, H130, and H136.

Belongs to the endoribonuclease YbeY family. Zn(2+) serves as cofactor.

It is found in the cytoplasm. Single strand-specific metallo-endoribonuclease involved in late-stage 70S ribosome quality control and in maturation of the 3' terminus of the 16S rRNA. This chain is Endoribonuclease YbeY, found in Chelativorans sp. (strain BNC1).